Consider the following 241-residue polypeptide: MAAESSLPPGDMEMSLSEHLRELRNRLIIVIAVTLLLMLAIFPFSAGLVDAVLAHAVPSYVKITTYAPMEMFKARLTMCFIGAITVGFPLLVYEAFRFAAPGLYPHEKRFLYLVFPFSLLLFVAGGLVAYFVTLPLFFSIVIGHGLEVAAPALSVGETFSIVTNFVAGLGLVFQVPLIIVLAIKMGLVKRETLVKGRLGVYGLLFGVAMFFSPDPTLFSQLIVLAVLAILFEVSMVLTRFL.

Transmembrane regions (helical) follow at residues 27–47 (LIIV…FSAG), 76–96 (LTMC…YEAF), 122–142 (FVAG…SIVI), 161–181 (IVTN…IIVL), 193–213 (LVKG…FFSP), and 217–237 (LFSQ…SMVL).

It belongs to the TatC family. Forms a complex with TatA.

It is found in the cell membrane. Its function is as follows. Part of the twin-arginine translocation (Tat) system that transports large folded proteins containing a characteristic twin-arginine motif in their signal peptide across membranes. This chain is Sec-independent protein translocase protein TatC, found in Methanocella arvoryzae (strain DSM 22066 / NBRC 105507 / MRE50).